Consider the following 228-residue polypeptide: Urease accessory protein UreF (228 aa).

Belongs to the UreF family. In terms of assembly, ureD, UreF and UreG form a complex that acts as a GTP-hydrolysis-dependent molecular chaperone, activating the urease apoprotein by helping to assemble the nickel containing metallocenter of UreC. The UreE protein probably delivers the nickel.

It localises to the cytoplasm. Functionally, required for maturation of urease via the functional incorporation of the urease nickel metallocenter. The protein is Urease accessory protein UreF of Photorhabdus laumondii subsp. laumondii (strain DSM 15139 / CIP 105565 / TT01) (Photorhabdus luminescens subsp. laumondii).